The sequence spans 386 residues: MAP kinase-activated protein kinase 2 (386 aa).

The disordered stretch occupies residues 1–29 (MLSGSPGQTPPAPFPSPPPPAPAQPPPPF). Residues 8-29 (QTPPAPFPSPPPPAPAQPPPPF) are compositionally biased toward pro residues. A Protein kinase domain is found at 50–311 (KVTSQVLGLG…ITEFMNHPWI (262 aa)). Residues 56 to 64 (LGLGINGKV) and Lys-79 contribute to the ATP site. 125–127 (ECL) is a binding site for staurosporine. The active-site Proton acceptor is Asp-172. Thr-208 is subject to Phosphothreonine; by MAPK14. Residue Ser-258 is modified to Phosphoserine; by MAPK14. At Ser-314 the chain carries Phosphoserine; by autocatalysis. Positions 314-350 (STKVPQTPLHTSRVLKEDKERWEDVKEEMTSALATMR) are autoinhibitory helix. Thr-320 is modified (phosphothreonine; by MAPK14). 2 consecutive short sequence motifs (nuclear export signal (NES)) follow at residues 331–354 (DKER…VDYE) and 342–351 (MTSALATMRV). Lys-339 is covalently cross-linked (Glycyl lysine isopeptide (Lys-Gly) (interchain with G-Cter in SUMO)). The segment at 352–376 (DYEQIKIKKIEDASNPLLLKRRKKA) is p38 MAPK-binding site. Short sequence motifs (bipartite nuclear localization signal) lie at residues 357-360 (KIKK) and 371-375 (KRRKK).

This sequence belongs to the protein kinase superfamily. CAMK Ser/Thr protein kinase family. In terms of assembly, heterodimer with p38-alpha/MAPK14; this heterodimer forms a stable complex: molecules are positioned 'face to face' so that the ATP-binding sites of both kinases are at the heterodimer interface. Interacts with PHC2. Interacts with HSF1. In terms of processing, sumoylation inhibits the protein kinase activity. Post-translationally, phosphorylated and activated by MAP kinase p38-alpha/MAPK14 at Thr-208; Ser-258 and Thr-320. As to expression, ubiquitously expressed (at protein level).

The protein resides in the cytoplasm. Its subcellular location is the nucleus. The enzyme catalyses L-seryl-[protein] + ATP = O-phospho-L-seryl-[protein] + ADP + H(+). The catalysed reaction is L-threonyl-[protein] + ATP = O-phospho-L-threonyl-[protein] + ADP + H(+). Activated following phosphorylation by p38-alpha/MAPK14 following various stresses. Inhibited following sumoylation. Specifically inhibited by pyrrolopyridine inhibitors. In terms of biological role, stress-activated serine/threonine-protein kinase involved in cytokine production, endocytosis, reorganization of the cytoskeleton, cell migration, cell cycle control, chromatin remodeling, DNA damage response and transcriptional regulation. Following stress, it is phosphorylated and activated by MAP kinase p38-alpha/MAPK14, leading to phosphorylation of substrates. Phosphorylates serine in the peptide sequence, Hyd-X-R-X(2)-S, where Hyd is a large hydrophobic residue. Phosphorylates ALOX5, CDC25B, CDC25C, CEP131, ELAVL1, HNRNPA0, HSP27/HSPB1, KRT18, KRT20, LIMK1, LSP1, PABPC1, PARN, PDE4A, RCSD1, RPS6KA3, TAB3 and TTP/ZFP36. Phosphorylates HSF1; leading to the interaction with HSP90 proteins and inhibiting HSF1 homotrimerization, DNA-binding and transactivation activities. Mediates phosphorylation of HSP27/HSPB1 in response to stress, leading to dissociation of HSP27/HSPB1 from large small heat-shock protein (sHsps) oligomers and impairment of their chaperone activities and ability to protect against oxidative stress effectively. Involved in inflammatory response by regulating tumor necrosis factor (TNF) and IL6 production post-transcriptionally: acts by phosphorylating AU-rich elements (AREs)-binding proteins ELAVL1, HNRNPA0, PABPC1 and TTP/ZFP36, leading to regulation of the stability and translation of TNF and IL6 mRNAs. Phosphorylation of TTP/ZFP36, a major post-transcriptional regulator of TNF, promotes its binding to 14-3-3 proteins and reduces its ARE mRNA affinity leading to inhibition of dependent degradation of ARE-containing transcripts. Phosphorylates CEP131 in response to cellular stress following ultraviolet irradiation which promotes binding of CEP131 to 14-3-3 proteins and inhibits formation of novel centriolar satellites. Also involved in late G2/M checkpoint following DNA damage through a process of post-transcriptional mRNA stabilization: following DNA damage, relocalizes from nucleus to cytoplasm and phosphorylates HNRNPA0 and PARN, leading to stabilization of GADD45A mRNA. Involved in toll-like receptor signaling pathway (TLR) in dendritic cells: required for acute TLR-induced macropinocytosis by phosphorylating and activating RPS6KA3. This chain is MAP kinase-activated protein kinase 2 (Mapkapk2), found in Mus musculus (Mouse).